The primary structure comprises 347 residues: 5-deoxyribose 1-phosphate isomerase (347 aa).

Substrate contacts are provided by residues 48–50 (RGA), Arg91, and Gln198. Asp239 serves as the catalytic Proton donor. Residue 249–250 (NK) coordinates substrate.

The protein belongs to the EIF-2B alpha/beta/delta subunits family. DrdI subfamily.

It catalyses the reaction 5-deoxy-alpha-D-ribose 1-phosphate = 5-deoxy-D-ribulose 1-phosphate. The protein operates within carbohydrate degradation. In terms of biological role, catalyzes the isomerization of 5-deoxy-alpha-D-ribose 1-phosphate to 5-deoxy-D-ribulose 1-phosphate, as part of a 5-deoxyribose salvage pathway that recycles this toxic radical SAM enzyme by-product to mainstream metabolites. This chain is 5-deoxyribose 1-phosphate isomerase, found in Bacillus cereus (strain ATCC 14579 / DSM 31 / CCUG 7414 / JCM 2152 / NBRC 15305 / NCIMB 9373 / NCTC 2599 / NRRL B-3711).